The sequence spans 1009 residues: Kinesin-like protein KIN-5C (1009 aa).

The Kinesin motor domain maps to 12 to 359 (NVQVLLRCRP…LDYAHRAKNI (348 aa)). An ATP-binding site is contributed by 98 to 105 (GQTGTGKT). The stretch at 406–526 (YQEESERKVM…NSSLHQKIGR (121 aa)) forms a coiled coil. Disordered regions lie at residues 862–882 (SNEQ…KDVT) and 987–1009 (YESF…SQVN). Composition is skewed to basic and acidic residues over residues 863–882 (NEQH…KDVT) and 987–996 (YESFATKETK). Residues 997-1009 (PQQLTRSPLSQVN) are compositionally biased toward polar residues.

This sequence belongs to the TRAFAC class myosin-kinesin ATPase superfamily. Kinesin family. KIN-5/BimC subfamily.

Its subcellular location is the cytoplasm. It is found in the cytoskeleton. The protein resides in the spindle. Functionally, responsible for microtubule translocation. May be important for the organization of phragmoplast-specific arrays of microtubules. Plays an essential role in stabilizing the mitotic spindle. Required during mitotic cytokinesis. The chain is Kinesin-like protein KIN-5C from Arabidopsis thaliana (Mouse-ear cress).